We begin with the raw amino-acid sequence, 353 residues long: MTAIRPGSVTFENVTKKFGNFTALPNLSLTVEPGTLVTLLGLSGCGKTTTLRLLAGLEHPTSGRILIGGKDVTNLPANERDVSMVFQSYALFPHMTSLENVAYGLESSGFKKNEARERAEEGLKLVGLGGMGHRLPAELSGGQQQRVAVARALVLEPQVLLLDEPLSNLDARLRRRVRTEIRELQQRLGFTAVYVTHDQDEALAVSDTIIVMKEGGIAQKGSPRDLYEAPASAFIADFMGEANVVPCEVISAENGEAVIRVAGLTHRVPARNAQPGPAQLAIRPNAVTLQPQAGGGFSGTVAHSAYLGDHIEYEIETEHGKLFIVDPAVEQSLPLQTDVSIQFKTRGLAIINQ.

In terms of domain architecture, ABC transporter spans 9–239; that stretch reads VTFENVTKKF…PASAFIADFM (231 aa). 41-48 lines the ATP pocket; it reads GLSGCGKT.

It belongs to the ABC transporter superfamily. Fe(3+) ion importer (TC 3.A.1.10) family. As to quaternary structure, the complex is composed of two ATP-binding proteins (FbpC), two transmembrane proteins (FbpB) and a solute-binding protein (FbpA).

It localises to the cell inner membrane. It catalyses the reaction Fe(3+)(out) + ATP + H2O = Fe(3+)(in) + ADP + phosphate + H(+). In terms of biological role, part of the ABC transporter complex FbpABC involved in Fe(3+) ions import. Responsible for energy coupling to the transport system. The protein is Fe(3+) ions import ATP-binding protein FbpC of Brucella melitensis biotype 1 (strain ATCC 23456 / CCUG 17765 / NCTC 10094 / 16M).